The following is a 597-amino-acid chain: uncharacterized protein (597 aa).

2 helical membrane-spanning segments follow: residues 4 to 23 (LLLALLLCLAVGTAGGFKIV) and 209 to 231 (FVSVSAPGFVGVTAAMSSAGIAI).

It localises to the cell membrane. This is an uncharacterized protein from Archaeoglobus fulgidus (strain ATCC 49558 / DSM 4304 / JCM 9628 / NBRC 100126 / VC-16).